Consider the following 391-residue polypeptide: Elongation factor Tu 1 (391 aa).

Positions 10–201 constitute a tr-type G domain; sequence KPHVNIGTIG…AVDSYIPTPE (192 aa). The tract at residues 19–26 is G1; sequence GHVDHGKT. Residue 19-26 participates in GTP binding; sequence GHVDHGKT. Thr-26 lines the Mg(2+) pocket. Residues 55–59 form a G2 region; the sequence is GITIS. A G3 region spans residues 76-79; the sequence is DCPG. Residues 76-80 and 131-134 each bind GTP; these read DCPGH and NKVD. The tract at residues 131-134 is G4; that stretch reads NKVD. A G5 region spans residues 169–171; that stretch reads SAL.

The protein belongs to the TRAFAC class translation factor GTPase superfamily. Classic translation factor GTPase family. EF-Tu/EF-1A subfamily. As to quaternary structure, monomer.

Its subcellular location is the cytoplasm. The catalysed reaction is GTP + H2O = GDP + phosphate + H(+). Its function is as follows. GTP hydrolase that promotes the GTP-dependent binding of aminoacyl-tRNA to the A-site of ribosomes during protein biosynthesis. The sequence is that of Elongation factor Tu 1 from Rhizobium etli (strain ATCC 51251 / DSM 11541 / JCM 21823 / NBRC 15573 / CFN 42).